Reading from the N-terminus, the 100-residue chain is Urease subunit gamma (100 aa).

Belongs to the urease gamma subunit family. As to quaternary structure, heterotrimer of UreA (gamma), UreB (beta) and UreC (alpha) subunits. Three heterotrimers associate to form the active enzyme.

Its subcellular location is the cytoplasm. The catalysed reaction is urea + 2 H2O + H(+) = hydrogencarbonate + 2 NH4(+). Its pathway is nitrogen metabolism; urea degradation; CO(2) and NH(3) from urea (urease route): step 1/1. The protein is Urease subunit gamma of Ruegeria pomeroyi (strain ATCC 700808 / DSM 15171 / DSS-3) (Silicibacter pomeroyi).